A 671-amino-acid polypeptide reads, in one-letter code: UvrABC system protein B (671 aa).

In terms of domain architecture, Helicase ATP-binding spans 26–183; that stretch reads EGLENGLAHQ…RRLSELQYSR (158 aa). 39–46 is an ATP binding site; the sequence is GVTGSGKT. Residues 92–115 carry the Beta-hairpin motif; the sequence is YYDYYQPEAYVPSSDTFIEKDASV. One can recognise a Helicase C-terminal domain in the interval 431 to 597; that stretch reads QVDDLLSEIR…GLNKKIGDIL (167 aa). Positions 631 to 666 constitute a UVR domain; that stretch reads DQKIRELEAKMYTYAQNLEFEQAAELRDQVHQLRQQ.

The protein belongs to the UvrB family. Forms a heterotetramer with UvrA during the search for lesions. Interacts with UvrC in an incision complex.

The protein localises to the cytoplasm. Its function is as follows. The UvrABC repair system catalyzes the recognition and processing of DNA lesions. A damage recognition complex composed of 2 UvrA and 2 UvrB subunits scans DNA for abnormalities. Upon binding of the UvrA(2)B(2) complex to a putative damaged site, the DNA wraps around one UvrB monomer. DNA wrap is dependent on ATP binding by UvrB and probably causes local melting of the DNA helix, facilitating insertion of UvrB beta-hairpin between the DNA strands. Then UvrB probes one DNA strand for the presence of a lesion. If a lesion is found the UvrA subunits dissociate and the UvrB-DNA preincision complex is formed. This complex is subsequently bound by UvrC and the second UvrB is released. If no lesion is found, the DNA wraps around the other UvrB subunit that will check the other stand for damage. The chain is UvrABC system protein B from Yersinia pseudotuberculosis serotype IB (strain PB1/+).